A 217-amino-acid polypeptide reads, in one-letter code: Probable GTP-binding protein EngB (217 aa).

The region spanning 24-207 (SQPEICFAGR…HALIESWLIP (184 aa)) is the EngB-type G domain. Residues 32-39 (GRSNAGKS), 59-63 (GRTQH), 81-84 (DLPG), 148-151 (TKCD), and 185-188 (LFSA) each bind GTP. Ser-39 and Thr-61 together coordinate Mg(2+).

This sequence belongs to the TRAFAC class TrmE-Era-EngA-EngB-Septin-like GTPase superfamily. EngB GTPase family. Mg(2+) is required as a cofactor.

Functionally, necessary for normal cell division and for the maintenance of normal septation. The sequence is that of Probable GTP-binding protein EngB from Paraburkholderia xenovorans (strain LB400).